Consider the following 151-residue polypeptide: Small ribosomal subunit protein uS15 (151 aa).

A compositionally biased stretch (basic residues) spans 1–16 (MPHRSRDKKGRSRSVR). The disordered stretch occupies residues 1 to 20 (MPHRSRDKKGRSRSVRPAHP).

The protein belongs to the universal ribosomal protein uS15 family. As to quaternary structure, part of the 30S ribosomal subunit.

The polypeptide is Small ribosomal subunit protein uS15 (Pyrobaculum aerophilum (strain ATCC 51768 / DSM 7523 / JCM 9630 / CIP 104966 / NBRC 100827 / IM2)).